The primary structure comprises 1383 residues: DNA-directed RNA polymerase subunit beta'' (1383 aa).

4 residues coordinate Zn(2+): C220, C289, C296, and C299.

It belongs to the RNA polymerase beta' chain family. RpoC2 subfamily. In terms of assembly, in plastids the minimal PEP RNA polymerase catalytic core is composed of four subunits: alpha, beta, beta', and beta''. When a (nuclear-encoded) sigma factor is associated with the core the holoenzyme is formed, which can initiate transcription. Zn(2+) serves as cofactor.

It is found in the plastid. Its subcellular location is the chloroplast. It catalyses the reaction RNA(n) + a ribonucleoside 5'-triphosphate = RNA(n+1) + diphosphate. Functionally, DNA-dependent RNA polymerase catalyzes the transcription of DNA into RNA using the four ribonucleoside triphosphates as substrates. The protein is DNA-directed RNA polymerase subunit beta'' of Oenothera biennis (German evening primrose).